Reading from the N-terminus, the 206-residue chain is Large ribosomal subunit protein uL4 (206 aa).

Residues 44–80 (KRAGTHSVKTRSTISGGGAKPWRQKGTGRARSGSNRS) are disordered.

This sequence belongs to the universal ribosomal protein uL4 family. As to quaternary structure, part of the 50S ribosomal subunit.

Functionally, one of the primary rRNA binding proteins, this protein initially binds near the 5'-end of the 23S rRNA. It is important during the early stages of 50S assembly. It makes multiple contacts with different domains of the 23S rRNA in the assembled 50S subunit and ribosome. Its function is as follows. Forms part of the polypeptide exit tunnel. In Oleidesulfovibrio alaskensis (strain ATCC BAA-1058 / DSM 17464 / G20) (Desulfovibrio alaskensis), this protein is Large ribosomal subunit protein uL4.